The sequence spans 268 residues: Ubiquinone biosynthesis protein COQ4 homolog, mitochondrial (268 aa).

Positions 171, 172, 175, and 187 each coordinate Zn(2+).

It belongs to the COQ4 family. Component of a multi-subunit COQ enzyme complex. It depends on Zn(2+) as a cofactor.

It localises to the mitochondrion inner membrane. The catalysed reaction is a 4-hydroxy-3-methoxy-5-(all-trans-polyprenyl)benzoate + H(+) = a 2-methoxy-6-(all-trans-polyprenyl)phenol + CO2. It participates in cofactor biosynthesis; ubiquinone biosynthesis. Lyase that catalyzes the C1-decarboxylation of 4-hydroxy-3-methoxy-5-(all-trans-polyprenyl)benzoic acid into 2-methoxy-6-(all-trans-polyprenyl)phenol during ubiquinone biosynthesis. In Drosophila yakuba (Fruit fly), this protein is Ubiquinone biosynthesis protein COQ4 homolog, mitochondrial.